The primary structure comprises 217 residues: Small ribosomal subunit protein uS11m (217 aa).

The transit peptide at 1 to 59 directs the protein to the mitochondrion; sequence MLLQPVWKGCRWTQFVRPIRRWNSTGTNRGVPFSFKDISNQEDITNISYPSSSDSVLTK.

Belongs to the universal ribosomal protein uS11 family. As to quaternary structure, component of the mitochondrial small ribosomal subunit (mt-SSU). Mature yeast 74S mitochondrial ribosomes consist of a small (37S) and a large (54S) subunit. The 37S small subunit contains a 15S ribosomal RNA (15S mt-rRNA) and 34 different proteins. The 54S large subunit contains a 21S rRNA (21S mt-rRNA) and 46 different proteins.

It is found in the mitochondrion. Component of the mitochondrial ribosome (mitoribosome), a dedicated translation machinery responsible for the synthesis of mitochondrial genome-encoded proteins, including at least some of the essential transmembrane subunits of the mitochondrial respiratory chain. The mitoribosomes are attached to the mitochondrial inner membrane and translation products are cotranslationally integrated into the membrane. The protein is Small ribosomal subunit protein uS11m (MRPS18) of Saccharomyces cerevisiae (strain ATCC 204508 / S288c) (Baker's yeast).